Consider the following 361-residue polypeptide: Deoxyribonuclease (361 aa).

The first 24 residues, 1–24, serve as a signal peptide directing secretion; it reads MMHLLRRGAFAILLIVLLPSAALA. H149 is an active-site residue.

This sequence belongs to the DNase I family. The cofactor is Mg(2+). Ca(2+) serves as cofactor.

The protein resides in the secreted. Functionally, DNA nuclease able to digest short and long DNA substrate. Is resistant to ionic strength and thus active at high salt concentration. The sequence is that of Deoxyribonuclease from Thioalkalivibrio sp. (strain K90mix).